We begin with the raw amino-acid sequence, 427 residues long: Serine hydroxymethyltransferase (427 aa).

120 to 122 (GHI) provides a ligand contact to (6S)-5,6,7,8-tetrahydrofolate. An N6-(pyridoxal phosphate)lysine modification is found at Lys226. Residue Glu243 coordinates (6S)-5,6,7,8-tetrahydrofolate.

Belongs to the SHMT family. Homodimer. Pyridoxal 5'-phosphate serves as cofactor.

It localises to the cytoplasm. It participates in amino-acid biosynthesis; glycine biosynthesis; glycine from L-serine: step 1/1. Catalyzes the reversible interconversion of serine and glycine with a modified folate serving as the one-carbon carrier. Also exhibits a pteridine-independent aldolase activity toward beta-hydroxyamino acids, producing glycine and aldehydes, via a retro-aldol mechanism. This Thermococcus gammatolerans (strain DSM 15229 / JCM 11827 / EJ3) protein is Serine hydroxymethyltransferase.